The chain runs to 606 residues: Large subunit GTPase 1 homolog (606 aa).

The disordered stretch occupies residues 1-21 (MGKKNKGGAPNLGRQLIKDRF). Residues 165–395 (WRQLWRVVER…LCDCPGLVMP (231 aa)) enclose the CP-type G domain. GTP is bound at residue 213 to 216 (NKSD). Phosphoserine is present on residues Ser276 and Ser279. GTP-binding positions include 344-351 (GYPNVGKS) and 388-391 (DCPG). Positions 574-606 (LVAGNDPAAKPWRHVKKERREKLRKKFSHLDEH) are disordered. Positions 584-600 (PWRHVKKERREKLRKKF) are enriched in basic residues.

It belongs to the TRAFAC class YlqF/YawG GTPase family. LSG1 subfamily. In terms of tissue distribution, expressed in larval serotonergic neurons.

The protein resides in the cytoplasm. Functionally, GTPase required for the nuclear export of the 60S ribosomal subunit. Probably acts by mediating the release of Nmd3 from the 60S ribosomal subunit after export into the cytoplasm. Regulator of body size; acts in serotonergic neurons to regulate insulin signaling and thus exerts global growth control. This is Large subunit GTPase 1 homolog (Ns3) from Drosophila melanogaster (Fruit fly).